Here is a 339-residue protein sequence, read N- to C-terminus: Ribosomal RNA small subunit methyltransferase H (339 aa).

S-adenosyl-L-methionine contacts are provided by residues 44-46, Asp-61, Phe-88, Asp-105, and Gln-112; that span reads GGY. Positions 263–312 are disordered; the sequence is PQAQSRHLPEKAAAQPVFEKPMKPVSPGEAETAENPRARSAHLRAARRTA. Residues 301–312 show a composition bias toward basic residues; the sequence is RSAHLRAARRTA.

Belongs to the methyltransferase superfamily. RsmH family.

Its subcellular location is the cytoplasm. The catalysed reaction is cytidine(1402) in 16S rRNA + S-adenosyl-L-methionine = N(4)-methylcytidine(1402) in 16S rRNA + S-adenosyl-L-homocysteine + H(+). Functionally, specifically methylates the N4 position of cytidine in position 1402 (C1402) of 16S rRNA. In Chelativorans sp. (strain BNC1), this protein is Ribosomal RNA small subunit methyltransferase H.